A 495-amino-acid polypeptide reads, in one-letter code: UDP-glycosyltransferase 73C5 (495 aa).

The helical transmembrane segment at 146–162 threads the bilayer; the sequence is ILFHGMGCFCLLCMHVL. UDP-alpha-D-glucose is bound by residues Ser296, 356 to 358, 373 to 381, and 395 to 398; these read SPQ, HCGWNSTLE, and FADQ. The segment at 446 to 477 is disordered; that stretch reads MGESDDAKERRRRAKELGDSAHKAVEEGGSSH. Positions 450–471 are enriched in basic and acidic residues; the sequence is DDAKERRRRAKELGDSAHKAVE.

It belongs to the UDP-glycosyltransferase family. As to expression, elongating hypocotyls and root-specific. Expressed in the vascular system, in meristematic tissues of the root tip, and in the vasculature of the hypocotyl right after germination. In late stage of flower development, expressed in petals, and in abscission zones.

It is found in the membrane. Functionally, specifically catalyzes 23-O-glucosylation of brassinosteroids, resulting probably in their inactivation. Also, involved in the O-glucosylation of trans-zeatin and dihydrozeatin. Active in vitro on cis-zeatin, dihydrozeatin-9-N-Glc, and olomoucine. Also involved in the detoxification of the Fusarium mycotoxin deoxynivalenol by the transfer of glucose from UDP-glucose to the hydroxyl group at C-3. Possesses low quercetin 7-O-glucosyltransferase and 4'-O-glucosyltransferase activities in vitro. This chain is UDP-glycosyltransferase 73C5 (UGT73C5), found in Arabidopsis thaliana (Mouse-ear cress).